Consider the following 136-residue polypeptide: Large-conductance mechanosensitive channel (136 aa).

2 helical membrane passes run 9–29 and 79–99; these read AFAS…GAAF and IQTV…LKAI.

It belongs to the MscL family. As to quaternary structure, homopentamer.

It is found in the cell inner membrane. Channel that opens in response to stretch forces in the membrane lipid bilayer. May participate in the regulation of osmotic pressure changes within the cell. This Shewanella sp. (strain MR-4) protein is Large-conductance mechanosensitive channel.